We begin with the raw amino-acid sequence, 360 residues long: Photosystem II protein D1 (360 aa).

The next 3 membrane-spanning stretches (helical) occupy residues 29–46 (YIGW…TATT), 118–133 (HFLL…QWEL), and 142–156 (WICV…AATA). Chlorophyll a is bound at residue histidine 118. Tyrosine 126 is a binding site for pheophytin a. [CaMn4O5] cluster contacts are provided by aspartate 170 and glutamate 189. The chain crosses the membrane as a helical span at residues 197–218 (FHMLGVAGVFGGSLFSAMHGSL). Residue histidine 198 participates in chlorophyll a binding. Residues histidine 215 and 264 to 265 (SF) each bind a quinone. Histidine 215 contributes to the Fe cation binding site. Histidine 272 lines the Fe cation pocket. A helical transmembrane segment spans residues 274–288 (FLGAWPVIGIWFTAM). Positions 332, 333, 342, and 344 each coordinate [CaMn4O5] cluster. Positions 345-360 (SGEQAPVALIAPAING) are excised as a propeptide.

The protein belongs to the reaction center PufL/M/PsbA/D family. In terms of assembly, PSII is composed of 1 copy each of membrane proteins PsbA, PsbB, PsbC, PsbD, PsbE, PsbF, PsbH, PsbI, PsbJ, PsbK, PsbL, PsbM, PsbT, PsbX, PsbY, PsbZ, Psb30/Ycf12, peripheral proteins PsbO, CyanoQ (PsbQ), PsbU, PsbV and a large number of cofactors. It forms dimeric complexes. The D1/D2 heterodimer binds P680, chlorophylls that are the primary electron donor of PSII, and subsequent electron acceptors. It shares a non-heme iron and each subunit binds pheophytin, quinone, additional chlorophylls, carotenoids and lipids. D1 provides most of the ligands for the Mn4-Ca-O5 cluster of the oxygen-evolving complex (OEC). There is also a Cl(-1) ion associated with D1 and D2, which is required for oxygen evolution. The PSII complex binds additional chlorophylls, carotenoids and specific lipids. serves as cofactor. In terms of processing, tyr-161 forms a radical intermediate that is referred to as redox-active TyrZ, YZ or Y-Z. Post-translationally, C-terminally processed by CtpA; processing is essential to allow assembly of the oxygen-evolving complex and thus photosynthetic growth.

The protein localises to the cellular thylakoid membrane. It carries out the reaction 2 a plastoquinone + 4 hnu + 2 H2O = 2 a plastoquinol + O2. Functionally, photosystem II (PSII) is a light-driven water:plastoquinone oxidoreductase that uses light energy to abstract electrons from H(2)O, generating O(2) and a proton gradient subsequently used for ATP formation. It consists of a core antenna complex that captures photons, and an electron transfer chain that converts photonic excitation into a charge separation. The D1/D2 (PsbA/PsbD) reaction center heterodimer binds P680, the primary electron donor of PSII as well as several subsequent electron acceptors. In Microcystis aeruginosa (strain NIES-843 / IAM M-2473), this protein is Photosystem II protein D1.